Consider the following 178-residue polypeptide: Large ribosomal subunit protein uL6 (178 aa).

Belongs to the universal ribosomal protein uL6 family. Part of the 50S ribosomal subunit.

Functionally, this protein binds to the 23S rRNA, and is important in its secondary structure. It is located near the subunit interface in the base of the L7/L12 stalk, and near the tRNA binding site of the peptidyltransferase center. The protein is Large ribosomal subunit protein uL6 of Campylobacter hominis (strain ATCC BAA-381 / DSM 21671 / CCUG 45161 / LMG 19568 / NCTC 13146 / CH001A).